We begin with the raw amino-acid sequence, 155 residues long: Large ribosomal subunit protein bL17 (155 aa).

Belongs to the bacterial ribosomal protein bL17 family. In terms of assembly, part of the 50S ribosomal subunit. Contacts protein L32.

This Syntrophotalea carbinolica (strain DSM 2380 / NBRC 103641 / GraBd1) (Pelobacter carbinolicus) protein is Large ribosomal subunit protein bL17.